The primary structure comprises 152 residues: Ubiquitin-conjugating enzyme E2 B (152 aa).

Positions 4 to 150 (PARRRLMRDF…VSAIVEQSWN (147 aa)) constitute a UBC core domain. C88 functions as the Glycyl thioester intermediate in the catalytic mechanism.

The protein belongs to the ubiquitin-conjugating enzyme family. In terms of assembly, interacts with RAD18, UBR2 and WAC.

It localises to the cell membrane. It is found in the nucleus. It catalyses the reaction S-ubiquitinyl-[E1 ubiquitin-activating enzyme]-L-cysteine + [E2 ubiquitin-conjugating enzyme]-L-cysteine = [E1 ubiquitin-activating enzyme]-L-cysteine + S-ubiquitinyl-[E2 ubiquitin-conjugating enzyme]-L-cysteine.. It participates in protein modification; protein ubiquitination. In terms of biological role, E2 ubiquitin-conjugating enzyme that accepts ubiquitin from the ubiquitin-activating enzyme E1 and transfers it to a E3 ubiquitin-protein ligase. In vitro catalyzes 'Lys-11'-, as well as 'Lys-48'- and 'Lys-63'-linked polyubiquitination. Together with the E3 enzyme BRE1 (RNF20 and/or RNF40), plays a role in transcription regulation by catalyzing the monoubiquitination of histone H2B at 'Lys-120' to form H2BK120ub1. H2BK120ub1 gives a specific tag for epigenetic transcriptional activation, elongation by RNA polymerase II, telomeric silencing, and is also a prerequisite for H3K4me and H3K79me formation. May play a role in DNA repair. Associates to the E3 ligase RAD18 to form the UBE2B-RAD18 ubiquitin ligase complex involved in mono-ubiquitination of DNA-associated PCNA on 'Lys-164'. In association with the E3 enzyme UBR4, is involved in N-end rule-dependent protein degradation. May be involved in neurite outgrowth. The protein is Ubiquitin-conjugating enzyme E2 B (UBE2B) of Bos taurus (Bovine).